A 419-amino-acid chain; its full sequence is Probable serine/threonine-protein kinase CST (419 aa).

The N-myristoyl glycine moiety is linked to residue Gly2. The S-palmitoyl cysteine moiety is linked to residue Cys4. Residues 8–48 (FSSSSPSKTGLHSHATTNNHSNGTEFSSTTGATTNSSVGQQ) form a disordered region. The span at 15 to 48 (KTGLHSHATTNNHSNGTEFSSTTGATTNSSVGQQ) shows a compositional bias: polar residues. The 283-residue stretch at 86–368 (FKPDSMLGQG…KEVVEVLEHI (283 aa)) folds into the Protein kinase domain. Residue 92 to 100 (LGQGGFGKV) participates in ATP binding. The residue at position 117 (Ser117) is a Phosphoserine. Lys124 contacts ATP. The residue at position 169 (Tyr169) is a Phosphotyrosine. Asp218 acts as the Proton acceptor in catalysis. The residue at position 222 (Ser222) is a Phosphoserine. Phosphothreonine is present on residues Thr253 and Thr258. A Phosphotyrosine modification is found at Tyr266. The span at 378-390 (SSTKQAVANSSRS) shows a compositional bias: polar residues. The tract at residues 378 to 419 (SSTKQAVANSSRSSPHHYRYKAGALGAERKRATPGRFGSVEK) is disordered.

This sequence belongs to the protein kinase superfamily. Ser/Thr protein kinase family. As to quaternary structure, interacts with SOBIR1/EVR and RLK5/HAE. In terms of processing, autophosphorylated on serine, threonine and tyrosine residues.

The protein localises to the cell membrane. Its subcellular location is the nucleus. The enzyme catalyses L-seryl-[protein] + ATP = O-phospho-L-seryl-[protein] + ADP + H(+). It carries out the reaction L-threonyl-[protein] + ATP = O-phospho-L-threonyl-[protein] + ADP + H(+). Acts as a spatial inhibitor of signaling that modulates abscission zone cell adhesion and expansion. Acts both directly and indirectly by physically interacting with RLK5/HAE and SOBIR1/EVR at the cell surface. This Arabidopsis thaliana (Mouse-ear cress) protein is Probable serine/threonine-protein kinase CST.